The primary structure comprises 485 residues: Glutathione gamma-glutamylcysteinyltransferase 1 (485 aa).

Residues 1–221 (MAMASLYRRS…GFMLISRPHR (221 aa)) form the Peptidase C83 domain. Catalysis depends on residues Cys-56, His-162, and Asp-180.

Belongs to the phytochelatin synthase family. As to expression, expressed in roots and shoots.

It catalyses the reaction [Glu(-Cys)](n)-Gly + glutathione + H(+) = [Glu(-Cys)](n+1)-Gly + glycine. With respect to regulation, requires cadmium for activity. Also activated in vitro or in heterologous system by Ag(+), Hg(+), Zn(2+), Cu(2+), Fe(2+) or Fe(3+) ions, but not by Co(2+) or Ni(2+) ions. Involved in the synthesis of phytochelatins (PC) and homophytochelatins (hPC), the heavy-metal-binding peptides of plants. Also involved in glutathione-conjugates degradation. The polypeptide is Glutathione gamma-glutamylcysteinyltransferase 1 (PCS1) (Arabidopsis thaliana (Mouse-ear cress)).